The following is a 64-amino-acid chain: RLALPPGAVCNGHKSDCQCFGAKYKCSCPFFWRFRKSAECHCKKGWAWTAIKKRSCHNRYQWSD.

Disulfide bonds link Cys10–Cys26, Cys17–Cys56, Cys19–Cys42, and Cys28–Cys40.

Belongs to the neurotoxin 04 (omega-agtx) family. 01 (type I omega-agtx) subfamily. Expressed by the venom gland.

It localises to the secreted. Insecticidal to house crickets. It induces an excitatory slow-onset impact that leads to irreversible spastic paralysis. It also modifies human voltage-gated potassium channel Kv1.5/KCNA5. Most likely, it binds to the voltage-sensing domain of the channel, suggesting it does not block the pore but prevents its opening at physiological membrane potentials. The recombinant peptide binds to the channel in an irreversible manner and slows down the hKv1.5 current activation kinetics. It is not toxic to mice, when intracranially injected (at 0.5 ug/g mouse). The sequence is that of Kappa-lycotoxin-Os1a from Oculicosa supermirabilis (Central Asian wolf-spider).